We begin with the raw amino-acid sequence, 172 residues long: Ubiquitin-conjugating enzyme E2 PEX4 (172 aa).

The region spanning 14–167 is the UBC core domain; the sequence is SASKRLIKEL…VELWCQDSDS (154 aa). The active-site Glycyl thioester intermediate is C104.

Belongs to the ubiquitin-conjugating enzyme family.

It catalyses the reaction S-ubiquitinyl-[E1 ubiquitin-activating enzyme]-L-cysteine + [E2 ubiquitin-conjugating enzyme]-L-cysteine = [E1 ubiquitin-activating enzyme]-L-cysteine + S-ubiquitinyl-[E2 ubiquitin-conjugating enzyme]-L-cysteine.. The protein operates within protein modification; protein ubiquitination. In terms of biological role, ubiquitin-conjugating enzyme E2 that is essential for peroxisome biogenesis and plays a key role in development, pathogenicity, and cell wall integrity. Required for long and very long-chain fatty acid utilization and is involved in lipid droplet accumulation and the elimination of reactive oxygen species. Controls the expression of proteins involved in protein biosynthesis, fatty acid metabolism, cell wall synthesis, oxidation-reduction reactions, as well as of the enzymes involved in the biosynthesis of the mycotoxin deoxynivalenol (DON), including TRI5, TRI6, and TRI10. The chain is Ubiquitin-conjugating enzyme E2 PEX4 from Gibberella zeae (strain ATCC MYA-4620 / CBS 123657 / FGSC 9075 / NRRL 31084 / PH-1) (Wheat head blight fungus).